Consider the following 100-residue polypeptide: Small ribosomal subunit protein uS14c (100 aa).

The protein belongs to the universal ribosomal protein uS14 family. As to quaternary structure, part of the 30S ribosomal subunit.

Its subcellular location is the plastid. The protein localises to the chloroplast. Binds 16S rRNA, required for the assembly of 30S particles. This Anthoceros angustus (Hornwort) protein is Small ribosomal subunit protein uS14c.